Here is a 238-residue protein sequence, read N- to C-terminus: MSSSTANVDPAELAKFSELAHRWWDLESEFRPLHEINPLRLGWIDGLAPLQGRRVLDVGCGGGILADAMARKGATVTGIDLATKSLKVAQLHALEAGTPDIQYREVSVEALAEESPASFDTVTCMEMLEHVPDPASVVQACARLVKPGGWVFFSTINRNAKAFLLAIVGAEYVLGMLPRGTHEYAKLIKPSELATACRSARLDVLQTRGMEYNPLTRRYALSGDTSVNYLMACRRAEA.

The S-adenosyl-L-methionine site is built by Arg-40, Gly-59, Asp-80, and Met-125.

This sequence belongs to the methyltransferase superfamily. UbiG/COQ3 family.

The enzyme catalyses a 3-demethylubiquinol + S-adenosyl-L-methionine = a ubiquinol + S-adenosyl-L-homocysteine + H(+). The catalysed reaction is a 3-(all-trans-polyprenyl)benzene-1,2-diol + S-adenosyl-L-methionine = a 2-methoxy-6-(all-trans-polyprenyl)phenol + S-adenosyl-L-homocysteine + H(+). Its pathway is cofactor biosynthesis; ubiquinone biosynthesis. In terms of biological role, O-methyltransferase that catalyzes the 2 O-methylation steps in the ubiquinone biosynthetic pathway. The polypeptide is Ubiquinone biosynthesis O-methyltransferase (Paracidovorax citrulli (strain AAC00-1) (Acidovorax citrulli)).